Reading from the N-terminus, the 566-residue chain is Type 3 secretion system secretin (566 aa).

Positions 1 to 22 (MKKFNIKSLTLLIVLLPLIVNA) are cleaved as a signal peptide.

This sequence belongs to the bacterial secretin family. T3SS SctC subfamily. As to quaternary structure, the core secretion machinery of the T3SS is composed of approximately 20 different proteins, including cytoplasmic components, a base, an export apparatus and a needle. This subunit is part of the base, which anchors the injectisome in the bacterial cell envelope. Forms a stable homooligomeric complex. Interacts with the pilotin MxiM/SctG and the inner membrane ring outer protein MxiJ/SctJ.

The protein resides in the cell outer membrane. In terms of biological role, component of the type III secretion system (T3SS), also called injectisome, which is used to inject bacterial effector proteins into eukaryotic host cells. Forms a ring-shaped multimeric structure with an apparent central pore in the outer membrane. Necessary for the secretion of Ipa invasins. The polypeptide is Type 3 secretion system secretin (Shigella flexneri).